Reading from the N-terminus, the 284-residue chain is Adenylate kinase 1, chloroplastic (284 aa).

A chloroplast-targeting transit peptide spans methionine 1–phenylalanine 36. Glycine 61–threonine 66 is a binding site for ATP. Residues alanine 81–valine 110 are NMP. AMP contacts are provided by residues threonine 82, arginine 87, lysine 108–valine 110, glycine 138–arginine 141, and glutamine 145. The tract at residues glycine 174–aspartate 222 is LID. Arginine 175 is a binding site for ATP. Residues arginine 219 and arginine 230 each contribute to the AMP site. ATP is bound at residue glycine 258.

The protein belongs to the adenylate kinase family. Monomer. Highly expressed in flowers and at lower levels in roots, leaves and stems.

Its subcellular location is the plastid. It is found in the chloroplast stroma. It catalyses the reaction AMP + ATP = 2 ADP. Functionally, catalyzes the reversible transfer of the terminal phosphate group between ATP and AMP. Plays an important role in cellular energy homeostasis, adenine nucleotide metabolism and plant growth. This chain is Adenylate kinase 1, chloroplastic (ADK), found in Arabidopsis thaliana (Mouse-ear cress).